The primary structure comprises 252 residues: Phosphate import ATP-binding protein PstB (252 aa).

Residues 5-247 enclose the ABC transporter domain; sequence MRGQDVKVFY…PKEQRTQDYI (243 aa). An ATP-binding site is contributed by 37-44; that stretch reads GPSGCGKS.

This sequence belongs to the ABC transporter superfamily. Phosphate importer (TC 3.A.1.7) family. As to quaternary structure, the complex is composed of two ATP-binding proteins (PstB), two transmembrane proteins (PstC and PstA) and a solute-binding protein (PstS).

It localises to the cell inner membrane. It carries out the reaction phosphate(out) + ATP + H2O = ADP + 2 phosphate(in) + H(+). Functionally, part of the ABC transporter complex PstSACB involved in phosphate import. Responsible for energy coupling to the transport system. The sequence is that of Phosphate import ATP-binding protein PstB from Bartonella quintana (strain Toulouse) (Rochalimaea quintana).